The following is a 122-amino-acid chain: Small ribosomal subunit protein bS6 (122 aa).

The protein belongs to the bacterial ribosomal protein bS6 family.

Functionally, binds together with bS18 to 16S ribosomal RNA. In Trichlorobacter lovleyi (strain ATCC BAA-1151 / DSM 17278 / SZ) (Geobacter lovleyi), this protein is Small ribosomal subunit protein bS6.